Consider the following 275-residue polypeptide: Large ribosomal subunit protein uL2 (275 aa).

2 disordered regions span residues Met1–Asp20 and Trp214–Lys275. The span at Lys255–Lys275 shows a compositional bias: basic residues.

This sequence belongs to the universal ribosomal protein uL2 family. As to quaternary structure, part of the 50S ribosomal subunit. Forms a bridge to the 30S subunit in the 70S ribosome.

Its function is as follows. One of the primary rRNA binding proteins. Required for association of the 30S and 50S subunits to form the 70S ribosome, for tRNA binding and peptide bond formation. It has been suggested to have peptidyltransferase activity; this is somewhat controversial. Makes several contacts with the 16S rRNA in the 70S ribosome. This is Large ribosomal subunit protein uL2 (rplB) from Deinococcus radiodurans (strain ATCC 13939 / DSM 20539 / JCM 16871 / CCUG 27074 / LMG 4051 / NBRC 15346 / NCIMB 9279 / VKM B-1422 / R1).